The chain runs to 208 residues: Ribosomal RNA large subunit methyltransferase E (208 aa).

Residues G63, W65, D83, D99, and D124 each contribute to the S-adenosyl-L-methionine site. K164 (proton acceptor) is an active-site residue.

Belongs to the class I-like SAM-binding methyltransferase superfamily. RNA methyltransferase RlmE family.

The protein localises to the cytoplasm. The enzyme catalyses uridine(2552) in 23S rRNA + S-adenosyl-L-methionine = 2'-O-methyluridine(2552) in 23S rRNA + S-adenosyl-L-homocysteine + H(+). Its function is as follows. Specifically methylates the uridine in position 2552 of 23S rRNA at the 2'-O position of the ribose in the fully assembled 50S ribosomal subunit. This chain is Ribosomal RNA large subunit methyltransferase E, found in Salmonella paratyphi A (strain ATCC 9150 / SARB42).